The primary structure comprises 988 residues: Vacuolar sorting protein 18 (988 aa).

The CHCR repeat unit spans residues 589-749 (NKNLNPRRLI…VVKQEKGAKR (161 aa)). The stretch at 785 to 819 (KEAICSSLEDYNKQIEQLKEEMNDATRGADNIRND) forms a coiled coil. The RING-type; degenerate zinc finger occupies 836–886 (CGVCKRKILMMSGDFRMAQGYSSAGPLAPFYVFPCGHSFHAQCLITHVTSC).

Belongs to the VPS18 family. In terms of assembly, core component of at least two putative endosomal tethering complexes, the homotypic fusion and vacuole protein sorting (HOPS) complex and the class C core vacuole/endosome tethering (CORVET) complex. Their common core is composed of the class C Vps proteins VPS11, VCL1, VPS18 and VPS33, which in HOPS further associates with VPS39 and VPS41 and in CORVET with VPS3.

The protein resides in the endosome membrane. It is found in the vacuole membrane. Its subcellular location is the cytoplasm. Essential protein required during embryogenesis. Believed to act as a core component of the putative HOPS endosomal tethering complex and of the class C core vacuole/endosome tethering (CORVET) complex. CORVET is required for vacuolar transport of SYP22. HOPS is required for the central vacuole formation. Involved in root development. Plays a role in vesicle-mediated protein trafficking to lysosomal compartments including the endocytic membrane transport pathways. In Arabidopsis thaliana (Mouse-ear cress), this protein is Vacuolar sorting protein 18.